A 423-amino-acid polypeptide reads, in one-letter code: tRNA(Ile)-lysidine synthase (423 aa).

43 to 48 contacts ATP; it reads SSGVDS.

This sequence belongs to the tRNA(Ile)-lysidine synthase family.

The protein resides in the cytoplasm. The catalysed reaction is cytidine(34) in tRNA(Ile2) + L-lysine + ATP = lysidine(34) in tRNA(Ile2) + AMP + diphosphate + H(+). Its function is as follows. Ligates lysine onto the cytidine present at position 34 of the AUA codon-specific tRNA(Ile) that contains the anticodon CAU, in an ATP-dependent manner. Cytidine is converted to lysidine, thus changing the amino acid specificity of the tRNA from methionine to isoleucine. In Helicobacter hepaticus (strain ATCC 51449 / 3B1), this protein is tRNA(Ile)-lysidine synthase.